Reading from the N-terminus, the 465-residue chain is UDP-N-acetylmuramate--L-alanine ligase (465 aa).

115–121 (GAHGKTT) contributes to the ATP binding site.

The protein belongs to the MurCDEF family.

It is found in the cytoplasm. The catalysed reaction is UDP-N-acetyl-alpha-D-muramate + L-alanine + ATP = UDP-N-acetyl-alpha-D-muramoyl-L-alanine + ADP + phosphate + H(+). The protein operates within cell wall biogenesis; peptidoglycan biosynthesis. Its function is as follows. Cell wall formation. In Coxiella burnetii (strain CbuG_Q212) (Coxiella burnetii (strain Q212)), this protein is UDP-N-acetylmuramate--L-alanine ligase.